The primary structure comprises 137 residues: Putative mucosal pentraxin homolog (137 aa).

The 137-residue stretch at 1 to 137 (MGMYLLHIGN…YVVTKPKVWA (137 aa)) folds into the Pentraxin (PTX) domain. Residues Glu73, Asp75, and Gln85 each coordinate Ca(2+).

This sequence belongs to the pentraxin family. In terms of tissue distribution, not expressed in the intestinal tract including ascending colon, descending colon and rectum. Not expressed in the human colon cancer cell lines HT-29 and CaCo-2.

The chain is Putative mucosal pentraxin homolog (MPTX1) from Homo sapiens (Human).